The chain runs to 247 residues: 2,3-bisphosphoglycerate-dependent phosphoglycerate mutase (247 aa).

Substrate contacts are provided by residues 7-14, 20-21, Arg59, 86-89, Lys97, 113-114, and 182-183; these read RHGESEWN, TG, ERHY, RR, and GN. Catalysis depends on His8, which acts as the Tele-phosphohistidine intermediate. The active-site Proton donor/acceptor is Glu86.

It belongs to the phosphoglycerate mutase family. BPG-dependent PGAM subfamily.

It catalyses the reaction (2R)-2-phosphoglycerate = (2R)-3-phosphoglycerate. It participates in carbohydrate degradation; glycolysis; pyruvate from D-glyceraldehyde 3-phosphate: step 3/5. Catalyzes the interconversion of 2-phosphoglycerate and 3-phosphoglycerate. This is 2,3-bisphosphoglycerate-dependent phosphoglycerate mutase from Treponema denticola (strain ATCC 35405 / DSM 14222 / CIP 103919 / JCM 8153 / KCTC 15104).